The chain runs to 471 residues: Serine hydroxymethyltransferase 4 (471 aa).

Met1 carries the post-translational modification N-acetylmethionine. Residue Ser39 participates in L-serine binding. The pemetrexed site is built by Ser39, Tyr59, and Glu61. Positions 61 and 69 each coordinate L-serine. Pemetrexed contacts are provided by residues 105–107 (SGS), His134, Ser190, and His218. The L-serine site is built by His218 and Lys244. Lys244 is subject to N6-(pyridoxal phosphate)lysine. Residue Gly290 coordinates pemetrexed. Lys373 is a binding site for methotrexate. Arg389 is a binding site for L-serine. A pemetrexed-binding site is contributed by Arg389.

This sequence belongs to the SHMT family. In terms of assembly, homotetramer. Interacts with UBP16. Requires pyridoxal 5'-phosphate as cofactor. Mostly expressed in flowers, less abundant in roots, inflorescence stems, and siliques, and barely detectable in leaves.

The protein localises to the cytoplasm. It catalyses the reaction (6R)-5,10-methylene-5,6,7,8-tetrahydrofolate + glycine + H2O = (6S)-5,6,7,8-tetrahydrofolate + L-serine. It participates in one-carbon metabolism; tetrahydrofolate interconversion. With respect to regulation, inhibited by the antifolate drugs methotrexate and pemetrexed. Catalyzes the interconversion of serine and glycine with the conversion of tetrahydrofolate (THF) into 5,10-methylene-THF. This chain is Serine hydroxymethyltransferase 4, found in Arabidopsis thaliana (Mouse-ear cress).